Consider the following 90-residue polypeptide: Small ribosomal subunit protein bS16 (90 aa).

The protein belongs to the bacterial ribosomal protein bS16 family.

This Brevibacillus brevis (strain 47 / JCM 6285 / NBRC 100599) protein is Small ribosomal subunit protein bS16.